The following is a 508-amino-acid chain: Abl interactor 1 (508 aa).

N-acetylalanine is present on A2. The tract at residues 18 to 79 (ALIESYQNLT…NNVLQLLDIQ (62 aa)) is required for binding to WASF1. The t-SNARE coiled-coil homology domain occupies 45-107 (KALEETKAYT…DIHKEKVARR (63 aa)). Y53 carries the post-translational modification Phosphotyrosine. 3 disordered regions span residues 159 to 290 (KHGN…APPL), 306 to 375 (APGS…LTPQ), and 388 to 421 (NIADSPTPPPPPPPDDIPMFDDSPPPPPPPPVDY). Positions 161-175 (GNNQPARTGTLSRTN) are enriched in polar residues. Phosphothreonine is present on residues T174 and T178. Residues S183 and S187 each carry the phosphoserine modification. Residue Y213 is modified to Phosphotyrosine; by ABL1. Residue T215 is modified to Phosphothreonine. S216, S222, and S225 each carry phosphoserine. A compositionally biased stretch (polar residues) spans 222–235 (SQHSPGRTASLNQR). A compositionally biased stretch (low complexity) spans 248-258 (SRENSGSSSIG). Residues 278–290 (VPPPSGAPPAPPL) are compositionally biased toward pro residues. Over residues 307 to 322 (PGSQYGTMTRQISRHN) the composition is skewed to polar residues. S319 and S323 each carry phosphoserine. Residues 337-347 (PSVTAQFSAQP) are compositionally biased toward polar residues. 2 stretches are compositionally biased toward pro residues: residues 393–403 (PTPPPPPPPDD) and 410–419 (SPPPPPPPPV). The region spanning 446 to 505 (NYIEKVVAIYDYTKDKDDELSFMEGAIIYVIKKNDDGWYEGVCNRVTGLFPGNYVESIMH) is the SH3 domain. Phosphotyrosine is present on Y455. A Phosphoserine modification is found at S466. Phosphothreonine is present on T507.

The protein belongs to the ABI family. Interacts with ABL1, ENAH, STX1A, SNAP25, VAMP2, EPS8, and through its N-terminus with WASF1. Part of a complex consisting of ABI1, STX1A and SNAP25. Part of a complex consisting of ABI1, EPS8 and SOS1. Interacts with SOS1, SOS2, GRB2, SPTA1 and the first SH3 domain of NCK1. Isoform 6 does not interact with NCK1. Component of the WAVE2 complex composed of ABI1, CYFIP1/SRA1, NCKAP1/NAP1 (NCKAP1l/HEM1 in hematopoietic cells) and WASF2/WAVE2. Interacts (via SH3 domain) with SHANK2 and SHANK3, but not SHANK1; the interaction is direct. Interacts with the heterodimer MYC:MAX; the interaction may enhance MYC:MAX transcriptional activity. Interacts with FNBP1L (via the SH3 domain), WASF2, and CDC42, but only in the presence of FNBP1L. As to quaternary structure, (Microbial infection) Interacts with human cytomegalovirus/HHV-5 protein UL135. In terms of processing, phosphorylated on tyrosine residues after serum stimulation or induction by v-Abl. Seems to be phosphorylated at Tyr-53 by ABL1, required for nuclear but not for synaptic localization. As to expression, widely expressed, with highest expression in brain.

The protein resides in the cytoplasm. It localises to the nucleus. It is found in the cell projection. The protein localises to the lamellipodium. Its subcellular location is the filopodium. The protein resides in the growth cone. It localises to the postsynaptic density. It is found in the cytoskeleton. In terms of biological role, may act in negative regulation of cell growth and transformation by interacting with nonreceptor tyrosine kinases ABL1 and/or ABL2. May play a role in regulation of EGF-induced Erk pathway activation. Involved in cytoskeletal reorganization and EGFR signaling. Together with EPS8 participates in transduction of signals from Ras to Rac. In vitro, a trimeric complex of ABI1, EPS8 and SOS1 exhibits Rac specific guanine nucleotide exchange factor (GEF) activity and ABI1 seems to act as an adapter in the complex. Regulates ABL1/c-Abl-mediated phosphorylation of ENAH. Recruits WASF1 to lamellipodia and there seems to regulate WASF1 protein level. In brain, seems to regulate the dendritic outgrowth and branching as well as to determine the shape and number of synaptic contacts of developing neurons. In Homo sapiens (Human), this protein is Abl interactor 1.